The following is a 187-amino-acid chain: Transcriptional repressor NrdR (187 aa).

Positions Met-1 to Gly-21 are disordered. The segment at Cys-3–Cys-34 is a zinc-finger region. The ATP-cone domain maps to Ile-49 to Asp-139. 2 stretches are compositionally biased toward polar residues: residues Ile-152 to Ser-162 and Ser-170 to Arg-187. A disordered region spans residues Ile-152–Arg-187.

Belongs to the NrdR family. The cofactor is Zn(2+).

Its function is as follows. Negatively regulates transcription of bacterial ribonucleotide reductase nrd genes and operons by binding to NrdR-boxes. The protein is Transcriptional repressor NrdR of Crocosphaera subtropica (strain ATCC 51142 / BH68) (Cyanothece sp. (strain ATCC 51142)).